The chain runs to 120 residues: UPF0231 protein YacL (120 aa).

This sequence belongs to the UPF0231 family.

In Salmonella paratyphi A (strain ATCC 9150 / SARB42), this protein is UPF0231 protein YacL.